We begin with the raw amino-acid sequence, 37 residues long: MKVRSSVKKICTKCRLIRRKGTVMVICTNPKHKQRQG.

This sequence belongs to the bacterial ribosomal protein bL36 family.

It is found in the plastid. The protein localises to the chloroplast. The chain is Large ribosomal subunit protein bL36c from Tetradesmus obliquus (Green alga).